Consider the following 282-residue polypeptide: Pseudokinase OPG198 (282 aa).

Residues M1 and K30 each coordinate ATP. Residues 1–282 enclose the Protein kinase domain; sequence MESFKYCFDN…DRLRRLFIQD (282 aa).

The protein belongs to the protein kinase superfamily. Ser/Thr protein kinase family. Poxviruses subfamily. As to quaternary structure, interacts with B1/VPK1. Interacts with host VRK1. Interacts with host VRK2.

It is found in the host nucleus. Both catalytically active kinases B1/VPK1 and host VRK2 repress B12 inhibitory activity in a B1/VPK1 deletion mutant strain. Functionally, pseudokinase that plays a role in viral DNA replication repression by activating the antiviral protein BANF1 and inhibiting the activity of host VRK1, a cellular modulator of BANF1. This Cynomys gunnisoni (Gunnison's prairie dog) protein is Pseudokinase OPG198 (OPG198).